A 677-amino-acid chain; its full sequence is O-fucosyltransferase 27 (677 aa).

The helical; Signal-anchor for type II membrane protein transmembrane segment at 15-35 threads the bilayer; the sequence is WIGLLGLVLSAFSLLVHFLLA. An N-linked (GlcNAc...) asparagine glycan is attached at Asn-130. The disordered stretch occupies residues 410–437; it reads PPSIEVETKHDSLKSTRQRPQPLPPPPA. N-linked (GlcNAc...) asparagine glycosylation is found at Asn-542 and Asn-592. A disordered region spans residues 619 to 677; the sequence is NAEKEEDLDEEDLSSSGLFFGHKESGGNNNGNNETVNSEANNKEEGQLEDQEELEGSER. The segment covering 622-631 has biased composition (acidic residues); that stretch reads KEEDLDEEDL. The segment covering 644–658 has biased composition (low complexity); it reads GGNNNGNNETVNSEA. A glycan (N-linked (GlcNAc...) asparagine) is linked at Asn-651. Residues 665-677 are compositionally biased toward acidic residues; that stretch reads QLEDQEELEGSER.

It belongs to the glycosyltransferase GT106 family.

It is found in the membrane. It participates in glycan metabolism. This is O-fucosyltransferase 27 from Arabidopsis thaliana (Mouse-ear cress).